Here is a 128-residue protein sequence, read N- to C-terminus: Large ribosomal subunit protein bL19 (128 aa).

This sequence belongs to the bacterial ribosomal protein bL19 family.

This protein is located at the 30S-50S ribosomal subunit interface and may play a role in the structure and function of the aminoacyl-tRNA binding site. The polypeptide is Large ribosomal subunit protein bL19 (Caldicellulosiruptor bescii (strain ATCC BAA-1888 / DSM 6725 / KCTC 15123 / Z-1320) (Anaerocellum thermophilum)).